Reading from the N-terminus, the 266-residue chain is 3-methyl-2-oxobutanoate hydroxymethyltransferase (266 aa).

Mg(2+)-binding residues include Asp-45 and Asp-84. 3-methyl-2-oxobutanoate contacts are provided by residues 45-46 (DS), Asp-84, and Lys-112. Mg(2+) is bound at residue Glu-114. Glu-181 serves as the catalytic Proton acceptor.

The protein belongs to the PanB family. As to quaternary structure, homodecamer; pentamer of dimers. Mg(2+) is required as a cofactor.

The protein localises to the cytoplasm. It carries out the reaction 3-methyl-2-oxobutanoate + (6R)-5,10-methylene-5,6,7,8-tetrahydrofolate + H2O = 2-dehydropantoate + (6S)-5,6,7,8-tetrahydrofolate. It participates in cofactor biosynthesis; (R)-pantothenate biosynthesis; (R)-pantoate from 3-methyl-2-oxobutanoate: step 1/2. In terms of biological role, catalyzes the reversible reaction in which hydroxymethyl group from 5,10-methylenetetrahydrofolate is transferred onto alpha-ketoisovalerate to form ketopantoate. This Pseudomonas fluorescens (strain SBW25) protein is 3-methyl-2-oxobutanoate hydroxymethyltransferase.